A 150-amino-acid chain; its full sequence is uncharacterized protein (150 aa).

The span at 81 to 90 (TTKPSCSFAQ) shows a compositional bias: polar residues. The disordered stretch occupies residues 81–125 (TTKPSCSFAQPVTPRTREGAGVRGHRRRRRGSLSLIPWKTSNDKQ).

This is an uncharacterized protein from Homo sapiens (Human).